Consider the following 310-residue polypeptide: DnaJ-like protein MG002 (310 aa).

The J domain occupies 1–66; that stretch reads MNLYDLLELP…KEKYDSMLKV (66 aa).

The protein is DnaJ-like protein MG002 of Mycoplasma genitalium (strain ATCC 33530 / DSM 19775 / NCTC 10195 / G37) (Mycoplasmoides genitalium).